Here is a 91-residue protein sequence, read N- to C-terminus: Transcription factor ILI7 (91 aa).

One can recognise a bHLH domain in the interval 4–58 (RSRSRASSAARITDEQIGDLVSKLQALLPEARLRSNDRVPSARVLQETCSYIRSL).

This sequence belongs to the bHLH protein family.

In terms of biological role, atypical and probable non DNA-binding bHLH transcription factor that integrates multiple signaling pathways to regulate cell elongation and plant development. This Oryza sativa subsp. indica (Rice) protein is Transcription factor ILI7 (ILI7).